A 121-amino-acid polypeptide reads, in one-letter code: Large ribosomal subunit protein uL3 (121 aa).

Q62 bears the N5-methylglutamine mark.

The protein belongs to the universal ribosomal protein uL3 family. Part of the 50S ribosomal subunit. Forms a cluster with proteins L14 and L19. In terms of processing, methylated by PrmB.

In terms of biological role, one of the primary rRNA binding proteins, it binds directly near the 3'-end of the 23S rRNA, where it nucleates assembly of the 50S subunit. In Aggregatibacter actinomycetemcomitans (Actinobacillus actinomycetemcomitans), this protein is Large ribosomal subunit protein uL3 (rplC).